We begin with the raw amino-acid sequence, 621 residues long: Chaperone protein HscA homolog (621 aa).

The protein belongs to the heat shock protein 70 family.

Chaperone involved in the maturation of iron-sulfur cluster-containing proteins. Has a low intrinsic ATPase activity which is markedly stimulated by HscB. The sequence is that of Chaperone protein HscA homolog from Ralstonia nicotianae (strain ATCC BAA-1114 / GMI1000) (Ralstonia solanacearum).